Here is a 449-residue protein sequence, read N- to C-terminus: C4-dicarboxylate transport protein (449 aa).

8 helical membrane-spanning segments follow: residues 18-38 (PFYL…ALLG), 61-81 (MIIS…VAHV), 93-113 (VYFL…AHVV), 159-179 (FVGD…IALA), 202-222 (LVQM…AFTI), 244-264 (SLLF…FSIL), 311-331 (GYSF…LFIA), and 369-389 (AATL…ILGV).

It belongs to the dicarboxylate/amino acid:cation symporter (DAACS) (TC 2.A.23) family.

It localises to the cell inner membrane. In terms of biological role, responsible for the transport of dicarboxylates such as succinate, fumarate, and malate from the periplasm across the membrane. The polypeptide is C4-dicarboxylate transport protein (Xylella fastidiosa (strain M12)).